The primary structure comprises 208 residues: Probable GTP-binding protein EngB (208 aa).

An EngB-type G domain is found at 23 to 205 (LTSEMVVLGR…RQTLLKHLLT (183 aa)). GTP-binding positions include 31–38 (GRSNVGKS), 57–61 (GKTRL), 84–87 (DLPG), 154–157 (TKFD), and 182–184 (FNA). Mg(2+) contacts are provided by S38 and T59.

This sequence belongs to the TRAFAC class TrmE-Era-EngA-EngB-Septin-like GTPase superfamily. EngB GTPase family. It depends on Mg(2+) as a cofactor.

Necessary for normal cell division and for the maintenance of normal septation. The chain is Probable GTP-binding protein EngB from Helicobacter pylori (strain ATCC 700392 / 26695) (Campylobacter pylori).